A 115-amino-acid polypeptide reads, in one-letter code: Movement protein TGB2 (115 aa).

The Cytoplasmic segment spans residues 1 to 13 (MSAQGHRLTAPVN). The chain crosses the membrane as a helical span at residues 14 to 34 (SEKVYIVLGLSFALVSITFLL). The Lumenal segment spans residues 35–74 (SRNSLPHVGDNIHSLPHGGAYRDGTKAILYNSPNLGSRVS). Residues 75–95 (LHNGKNAAFAAVLLLTLLIYG) form a helical membrane-spanning segment. Topologically, residues 96 to 115 (SKYISQRNHTCACGNNHSSH) are cytoplasmic.

It belongs to the Tymovirales TGBp2 protein family.

Its subcellular location is the host endoplasmic reticulum membrane. In terms of biological role, plays a role in viral cell-to-cell propagation, by facilitating genome transport to neighboring plant cells through plasmosdesmata,. The protein is Movement protein TGB2 of Potato virus X (PVX).